The primary structure comprises 237 residues: Phosphoribosylaminoimidazole-succinocarboxamide synthase (237 aa).

Belongs to the SAICAR synthetase family.

It catalyses the reaction 5-amino-1-(5-phospho-D-ribosyl)imidazole-4-carboxylate + L-aspartate + ATP = (2S)-2-[5-amino-1-(5-phospho-beta-D-ribosyl)imidazole-4-carboxamido]succinate + ADP + phosphate + 2 H(+). It functions in the pathway purine metabolism; IMP biosynthesis via de novo pathway; 5-amino-1-(5-phospho-D-ribosyl)imidazole-4-carboxamide from 5-amino-1-(5-phospho-D-ribosyl)imidazole-4-carboxylate: step 1/2. This is Phosphoribosylaminoimidazole-succinocarboxamide synthase from Escherichia coli O127:H6 (strain E2348/69 / EPEC).